The sequence spans 79 residues: DNA-directed RNA polymerase subunit omega (79 aa).

The protein belongs to the RNA polymerase subunit omega family. As to quaternary structure, the RNAP catalytic core consists of 2 alpha, 1 beta, 1 beta' and 1 omega subunit. When a sigma factor is associated with the core the holoenzyme is formed, which can initiate transcription.

It catalyses the reaction RNA(n) + a ribonucleoside 5'-triphosphate = RNA(n+1) + diphosphate. Promotes RNA polymerase assembly. Latches the N- and C-terminal regions of the beta' subunit thereby facilitating its interaction with the beta and alpha subunits. In Thermotoga neapolitana (strain ATCC 49049 / DSM 4359 / NBRC 107923 / NS-E), this protein is DNA-directed RNA polymerase subunit omega.